Consider the following 513-residue polypeptide: Protein phosphatase 1H (513 aa).

The residue at position 7 (serine 7) is a Phosphoserine. In terms of domain architecture, PPM-type phosphatase spans 77–506; the sequence is ATGYAEVINA…DDISVYVIPL (430 aa). Residues 109–133 form a disordered region; that stretch reads TITSTPNRNSKRRSSLPNGEGLQLK. Threonine 113 carries the post-translational modification Phosphothreonine. Serine 123 and serine 210 each carry phosphoserine. Arginine 212 bears the Omega-N-methylarginine mark. Serine 220 bears the Phosphoserine mark. A Phosphothreonine modification is found at threonine 223. The residue at position 421 (serine 421) is a Phosphoserine.

This sequence belongs to the PP2C family.

The protein localises to the nucleus. It localises to the cytoplasm. It catalyses the reaction O-phospho-L-seryl-[protein] + H2O = L-seryl-[protein] + phosphate. It carries out the reaction O-phospho-L-threonyl-[protein] + H2O = L-threonyl-[protein] + phosphate. Dephosphorylates CDKN1B at 'Thr-187', thus removing a signal for proteasomal degradation. This Mus musculus (Mouse) protein is Protein phosphatase 1H (Ppm1h).